The chain runs to 515 residues: Fibril protein (515 aa).

Methionine 1 carries the post-translational modification Blocked amino end (Met). Helical stretches follow at residues 21–34, 206–228, 357–376, and 426–440; these read VKKYWWKNCVIQHV, HKFKMYETVNTLKYLLRRLFNLL, KIETVETVANEIAAAIAEKC, and SNEFLKYLNEALKDV.

It is found in the cytoplasm. The protein localises to the cytoskeleton. Acts as a cytoskeletal structure involved in the shape and motility of spiroplasmas. This Spiroplasma citri protein is Fibril protein.